The primary structure comprises 125 residues: Large-conductance mechanosensitive channel (125 aa).

A run of 3 helical transmembrane segments spans residues 19-39 (VGVI…KYII), 42-62 (FLGL…IGNA), and 66-86 (VGSF…VFLM).

It belongs to the MscL family. In terms of assembly, homopentamer.

The protein localises to the cell membrane. In terms of biological role, channel that opens in response to stretch forces in the membrane lipid bilayer. May participate in the regulation of osmotic pressure changes within the cell. The protein is Large-conductance mechanosensitive channel of Ligilactobacillus salivarius (strain UCC118) (Lactobacillus salivarius).